Reading from the N-terminus, the 456-residue chain is Glycine receptor subunit alpha-4 (456 aa).

A signal peptide spans M1 to A27. The Extracellular segment spans residues K28–Y256. A glycan (N-linked (GlcNAc...) asparagine) is linked at N71. Intrachain disulfides connect C171/C185 and C232/C243. Residue Y236–F241 participates in strychnine binding. A helical membrane pass occupies residues Y257–I278. Topologically, residues N279–A283 are cytoplasmic. The helical transmembrane segment at P284 to S304 threads the bilayer. Over R305–K315 the chain is Extracellular. The helical transmembrane segment at A316 to A336 threads the bilayer. Residues A337 to T423 lie on the Cytoplasmic side of the membrane. The chain crosses the membrane as a helical span at residues I424–Y444. Over K445–L456 the chain is Extracellular.

Belongs to the ligand-gated ion channel (TC 1.A.9) family. Glycine receptor (TC 1.A.9.3) subfamily. GLRA4 sub-subfamily. As to quaternary structure, homopentamer (in vitro). Heteropentamer composed of GLRA4 and GLRB. As to expression, detected in the retina inner plexiform layer, especially at the border between layer three and four (at protein level).

The protein localises to the postsynaptic cell membrane. Its subcellular location is the synapse. It is found in the perikaryon. The protein resides in the cell projection. It localises to the dendrite. The protein localises to the cell membrane. It catalyses the reaction chloride(in) = chloride(out). Inhibited by strychnine. Glycine receptors are ligand-gated chloride channels. Channel opening is triggered by extracellular glycine. Channel opening is also triggered by taurine and beta-alanine. Plays a role in the down-regulation of neuronal excitability. Contributes to the generation of inhibitory postsynaptic currents. The protein is Glycine receptor subunit alpha-4 (Glra4) of Mus musculus (Mouse).